The following is a 197-amino-acid chain: Holliday junction branch migration complex subunit RuvA (197 aa).

The segment at 1–64 is domain I; sequence MIASIRGILI…EDSLTLYGFE (64 aa). Residues 65–145 form a domain II region; it reads TVEQRQLFET…GLPTGAAVTP (81 aa). Residues 146 to 148 are flexible linker; that stretch reads AVA. The domain III stretch occupies residues 148–197; the sequence is AAANAELSEALISLGFTDAEAAAAIAALPSDAPPDLEERVRLALRYFSAS.

This sequence belongs to the RuvA family. In terms of assembly, homotetramer. Forms an RuvA(8)-RuvB(12)-Holliday junction (HJ) complex. HJ DNA is sandwiched between 2 RuvA tetramers; dsDNA enters through RuvA and exits via RuvB. An RuvB hexamer assembles on each DNA strand where it exits the tetramer. Each RuvB hexamer is contacted by two RuvA subunits (via domain III) on 2 adjacent RuvB subunits; this complex drives branch migration. In the full resolvosome a probable DNA-RuvA(4)-RuvB(12)-RuvC(2) complex forms which resolves the HJ.

It is found in the cytoplasm. Functionally, the RuvA-RuvB-RuvC complex processes Holliday junction (HJ) DNA during genetic recombination and DNA repair, while the RuvA-RuvB complex plays an important role in the rescue of blocked DNA replication forks via replication fork reversal (RFR). RuvA specifically binds to HJ cruciform DNA, conferring on it an open structure. The RuvB hexamer acts as an ATP-dependent pump, pulling dsDNA into and through the RuvAB complex. HJ branch migration allows RuvC to scan DNA until it finds its consensus sequence, where it cleaves and resolves the cruciform DNA. This chain is Holliday junction branch migration complex subunit RuvA, found in Roseiflexus sp. (strain RS-1).